An 875-amino-acid polypeptide reads, in one-letter code: Alanine--tRNA ligase (875 aa).

4 residues coordinate Zn(2+): histidine 562, histidine 566, cysteine 665, and histidine 669.

It belongs to the class-II aminoacyl-tRNA synthetase family. It depends on Zn(2+) as a cofactor.

The protein localises to the cytoplasm. The enzyme catalyses tRNA(Ala) + L-alanine + ATP = L-alanyl-tRNA(Ala) + AMP + diphosphate. Functionally, catalyzes the attachment of alanine to tRNA(Ala) in a two-step reaction: alanine is first activated by ATP to form Ala-AMP and then transferred to the acceptor end of tRNA(Ala). Also edits incorrectly charged Ser-tRNA(Ala) and Gly-tRNA(Ala) via its editing domain. In Saccharophagus degradans (strain 2-40 / ATCC 43961 / DSM 17024), this protein is Alanine--tRNA ligase.